The following is a 369-amino-acid chain: IST1-like protein (369 aa).

The stretch at 12–59 forms a coiled coil; it reads KLKVQLKLAVSRIQILKNKKANIVRDEKRNVAELLRKKNEESARIRVE. The segment at 224 to 354 is disordered; sequence QIIQQQQQPQ…SSDTGYPDYD (131 aa). Composition is skewed to low complexity over residues 225–239 and 246–270; these read IIQQ…SFPI and PTFS…SPQF. Residues 277–305 show a composition bias toward polar residues; it reads FYNNNSGNQTPQFPTISTNNSDGYSNDKF. Low complexity predominate over residues 306–337; sequence NNGNNNYNNNNNNNNNNNNNNNHNNNNNNNNN.

This sequence belongs to the IST1 family.

The protein is IST1-like protein of Dictyostelium discoideum (Social amoeba).